Here is a 462-residue protein sequence, read N- to C-terminus: Glycine--tRNA ligase (462 aa).

Substrate contacts are provided by Arg94 and Glu143. ATP-binding positions include 175–177 (RNE), 185–190 (FRTCEF), 259–260 (EL), and 308–311 (GLTR). A substrate-binding site is contributed by 190-194 (FEQME). 304–308 (ETSAG) is a binding site for substrate.

It belongs to the class-II aminoacyl-tRNA synthetase family. Homodimer.

Its subcellular location is the cytoplasm. The catalysed reaction is tRNA(Gly) + glycine + ATP = glycyl-tRNA(Gly) + AMP + diphosphate. Catalyzes the attachment of glycine to tRNA(Gly). This chain is Glycine--tRNA ligase, found in Treponema pallidum (strain Nichols).